Consider the following 414-residue polypeptide: Probable sugar-binding periplasmic protein (414 aa).

The signal sequence occupies residues 1-22 (MRKFMTTTAVAALMLAATAARA).

The protein belongs to the bacterial solute-binding protein 1 family.

The protein resides in the periplasm. In terms of biological role, part of a binding-protein-dependent transport system for a sugar. This Rhizobium meliloti (strain 1021) (Ensifer meliloti) protein is Probable sugar-binding periplasmic protein.